The primary structure comprises 203 residues: B-cell CLL/lymphoma 7 protein family member B-A (203 aa).

Disordered regions lie at residues 55–80 and 94–148; these read KEKEKSKVSVGGEMQRKNFPSEESSD and SNQS…EIME. The span at 109–129 shows a compositional bias: low complexity; it reads ADSSNNSSPPASEPVSPAPQS.

Belongs to the BCL7 family.

This chain is B-cell CLL/lymphoma 7 protein family member B-A (bcl7ba), found in Danio rerio (Zebrafish).